A 483-amino-acid chain; its full sequence is Altronate oxidoreductase (483 aa).

18–29 provides a ligand contact to NAD(+); the sequence is IIQFGEGNFLRA.

Belongs to the mannitol dehydrogenase family. UxaB subfamily.

It catalyses the reaction D-altronate + NAD(+) = keto-D-tagaturonate + NADH + H(+). It participates in carbohydrate metabolism; pentose and glucuronate interconversion. This chain is Altronate oxidoreductase, found in Cronobacter sakazakii (strain ATCC BAA-894) (Enterobacter sakazakii).